A 509-amino-acid chain; its full sequence is Scavenger receptor class B member 1 (509 aa).

Topologically, residues methionine 1–alanine 11 are cytoplasmic. Residues valine 12–methionine 32 traverse the membrane as a helical segment. Residues proline 33–valine 440 are Extracellular-facing. N-linked (GlcNAc...) asparagine glycosylation is found at asparagine 102, asparagine 108, asparagine 173, asparagine 212, asparagine 227, asparagine 255, asparagine 310, asparagine 330, and asparagine 383. Cysteines 251 and 384 form a disulfide. A helical membrane pass occupies residues leucine 441–isoleucine 461. Topologically, residues tyrosine 462 to leucine 509 are cytoplasmic.

This sequence belongs to the CD36 family. Post-translationally, N-glycosylated. The six cysteines of the extracellular domain are all involved in intramolecular disulfide bonds.

The protein localises to the cell membrane. Its subcellular location is the membrane. It is found in the caveola. Its function is as follows. Receptor for different ligands such as phospholipids, cholesterol ester, lipoproteins, phosphatidylserine and apoptotic cells. Receptor for HDL, mediating selective uptake of cholesteryl ether and HDL-dependent cholesterol efflux. Also facilitates the flux of free and esterified cholesterol between the cell surface and apoB-containing lipoproteins and modified lipoproteins, although less efficiently than HDL. May be involved in the phagocytosis of apoptotic cells, via its phosphatidylserine binding activity. This is Scavenger receptor class B member 1 (SCARB1) from Cricetulus griseus (Chinese hamster).